A 165-amino-acid chain; its full sequence is Large ribosomal subunit protein uL11 (165 aa).

The protein belongs to the universal ribosomal protein uL11 family.

Functionally, binds directly to 26S ribosomal RNA. The polypeptide is Large ribosomal subunit protein uL11 (rpl-12) (Caenorhabditis briggsae).